The chain runs to 222 residues: Superoxide dismutase [Mn], mitochondrial (222 aa).

A mitochondrion-targeting transit peptide spans 1-24 (MLSRGVCGTSRQLAPALGYLGSRQ). H50 is a Mn(2+) binding site. Y58 carries the post-translational modification 3'-nitrotyrosine. K68 and K75 each carry N6-acetyllysine; alternate. Residues K68 and K75 each carry the N6-succinyllysine; alternate modification. H98 provides a ligand contact to Mn(2+). Residue K114 is modified to N6-acetyllysine. 2 positions are modified to N6-acetyllysine; alternate: K122 and K130. N6-succinyllysine; alternate occurs at positions 122 and 130. Positions 183 and 187 each coordinate Mn(2+). K202 is modified (N6-acetyllysine).

The protein belongs to the iron/manganese superoxide dismutase family. In terms of assembly, homotetramer. It depends on Mn(2+) as a cofactor. Nitrated under oxidative stress. Nitration coupled with oxidation inhibits the catalytic activity. In terms of processing, acetylation at Lys-122 decreases enzymatic activity. Deacetylated by SIRT3 upon exposure to ionizing radiations or after long fasting. Post-translationally, polyubiquitinated; leading to proteasomal degradation. Deubiquitinated by USP36 which increases protein stability.

It localises to the mitochondrion matrix. The catalysed reaction is 2 superoxide + 2 H(+) = H2O2 + O2. Destroys superoxide anion radicals which are normally produced within the cells and which are toxic to biological systems. The chain is Superoxide dismutase [Mn], mitochondrial (SOD2) from Pongo pygmaeus (Bornean orangutan).